The sequence spans 1385 residues: Kinesin-like protein KIF15 (1385 aa).

The disordered stretch occupies residues M1 to D24. The span at R10–S21 shows a compositional bias: polar residues. One can recognise a Kinesin motor domain in the interval A26–I363. G109 to T116 contributes to the ATP binding site. A coiled-coil region spans residues V368–E1385. K1007 is subject to N6-acetyllysine. Residues S1139 and S1167 each carry the phosphoserine modification. Residues D1222 to E1243 form a disordered region. A compositionally biased stretch (polar residues) spans E1228–K1241.

Belongs to the TRAFAC class myosin-kinesin ATPase superfamily. Kinesin family. KLP2 subfamily. In terms of assembly, interacts with MKI67 and TPX2. Expressed in sympathetic neurons.

The protein resides in the cytoplasm. The protein localises to the cytoskeleton. It localises to the spindle. In terms of biological role, plus-end directed kinesin-like motor enzyme involved in mitotic spindle assembly. The polypeptide is Kinesin-like protein KIF15 (Kif15) (Rattus norvegicus (Rat)).